The following is a 175-amino-acid chain: Peptide deformylase (175 aa).

Residues Cys99 and His141 each contribute to the Fe cation site. The active site involves Glu142. His145 is a binding site for Fe cation.

The protein belongs to the polypeptide deformylase family. Fe(2+) is required as a cofactor.

It carries out the reaction N-terminal N-formyl-L-methionyl-[peptide] + H2O = N-terminal L-methionyl-[peptide] + formate. In terms of biological role, removes the formyl group from the N-terminal Met of newly synthesized proteins. Requires at least a dipeptide for an efficient rate of reaction. N-terminal L-methionine is a prerequisite for activity but the enzyme has broad specificity at other positions. This is Peptide deformylase from Rickettsia typhi (strain ATCC VR-144 / Wilmington).